We begin with the raw amino-acid sequence, 328 residues long: Phospholipid scramblase 1 (328 aa).

The proline-rich domain (PRD) stretch occupies residues M1–P93. Residues M1 to P96 are disordered. At M1–K297 the chain is on the cytoplasmic side. Positions P18 to P26 match the SH3-binding 1 motif. A PPxY motif motif is present at residues P22–Y25. A compositionally biased stretch (low complexity) spans A28–Q47. Over residues P49–P64 the composition is skewed to pro residues. Positions P56–P64 match the SH3-binding 2 motif. Y83 bears the Phosphotyrosine; by ABL mark. Positions P93–P101 match the SH3-binding 3 motif. T170 is modified (phosphothreonine; by PKC/PRKCD). 4 S-palmitoyl cysteine lipidation sites follow: C193, C194, C197, and C198. The short motif at S269–F275 is the Nuclear localization signal element. Residues M298–F314 traverse the membrane as a helical segment. Over E315–Q328 the chain is Extracellular.

This sequence belongs to the phospholipid scramblase family. Forms homooligomers in the presence of calcium. Interacts with ABL. Interacts with RELT, RELL1 and RELL2. Interacts with OXSR1 in the presence of RELT. Interacts with OCLN, TOP2A and TOP2B. Interacts with TRPC1, TRPC4 and TRPC5. Interacts with ILDR1. Ca(2+) serves as cofactor. It depends on Mg(2+) as a cofactor. The cofactor is Zn(2+). In terms of processing, phosphorylation at Thr-170 by PKC/PKCD increases its phospholipid scramblase activity during both cell stimulation and apoptosis. Phosphorylated by OXSR1 in the presence of RELT. Palmitoylation is required for its phospholipid scramblase activity. Palmitoylation regulates its localization to the cell membrane or the nucleus; trafficking to the cell membrane is dependent upon palmitoylation whereas in the absence of palmitoylation, localizes to the nucleus. In terms of tissue distribution, highly expressed in kidney, lung, liver and bone marrow, slightly in spleen, heart and macrophage.

It localises to the cell membrane. The protein resides in the nucleus. The protein localises to the cytoplasm. Its subcellular location is the perinuclear region. It carries out the reaction a 1,2-diacyl-sn-glycero-3-phosphocholine(in) = a 1,2-diacyl-sn-glycero-3-phosphocholine(out). The catalysed reaction is a 1,2-diacyl-sn-glycero-3-phosphoethanolamine(in) = a 1,2-diacyl-sn-glycero-3-phosphoethanolamine(out). It catalyses the reaction a 1,2-diacyl-sn-glycero-3-phospho-L-serine(in) = a 1,2-diacyl-sn-glycero-3-phospho-L-serine(out). Functionally, catalyzes calcium-induced ATP-independent rapid bidirectional and non-specific distribution of phospholipids (lipid scrambling or lipid flip-flop) between the inner and outer leaflet of the plasma membrane resulting in collapse of the phospholipid asymmetry which leads to phosphatidylserine externalization on the cell surface. Mediates calcium-dependent phosphatidylserine externalization and apoptosis in neurons via its association with TRPC5. Also exhibits magnesium-dependent nuclease activity against double-stranded DNA and RNA but not single-stranded DNA and can enhance DNA decatenation mediated by TOP2A. Negatively regulates FcR-mediated phagocytosis in differentiated macrophages. May contribute to cytokine-regulated cell proliferation and differentiation. The sequence is that of Phospholipid scramblase 1 (Plscr1) from Mus musculus (Mouse).